Here is a 691-residue protein sequence, read N- to C-terminus: Pentatricopeptide repeat-containing protein At4g37170 (691 aa).

PPR repeat units follow at residues 84 to 118 (PAST…GFVP), 119 to 149 (GIVI…MPNR), 150 to 184 (DLCS…DSYS), 185 to 211 (WTAM…MQRV), 217 to 251 (NIFT…GLDS), 252 to 286 (DEVL…DVVS), 287 to 317 (WTSM…CERP), 318 to 352 (NEYT…GFDP), 353 to 383 (YSFA…CPKP), 384 to 418 (DLVS…GTKP), 419 to 449 (DHVT…ITEK), and 455 to 485 (TSDH…MPMK). The tract at residues 490–565 (LWASVLGGCS…RPGSSWTEIK (76 aa)) is type E motif. Residues 566 to 596 (RKRHVFIAADTSHPMYNQIVEFLRELRKKMK) are type E(+) motif. The type DYW motif stretch occupies residues 597-691 (EEGYVPATSL…NGQCSCGDYW (95 aa)).

The protein belongs to the PPR family. PCMP-H subfamily.

This is Pentatricopeptide repeat-containing protein At4g37170 (PCMP-H5) from Arabidopsis thaliana (Mouse-ear cress).